Here is a 261-residue protein sequence, read N- to C-terminus: Beta cell expansion factor A (261 aa).

An N-terminal signal peptide occupies residues 1 to 21 (MNKRNWLLALSLSLAFSPCYA). The interval 99–261 (KTAKEARIAI…IDKDLTETSR (163 aa)) is SYLF domain.

The protein resides in the secreted. It is found in the host. In terms of biological role, stimulates the proliferation of insulin-producing beta cells during development in gnotobiotic zebrafish and mice. BefA is a microbiome-derived protein that traffics from the host intestinal lumen to the pancreas to act directly on pancreatic islets. In pancreas, interacts directly with host beta cells and elicits their proliferation via a mechanism of increasing membrane permeabilization. Can also permeabilize bacterial cell membranes, but does not show killing of target bacteria. The polypeptide is Beta cell expansion factor A (Aeromonas veronii).